A 280-amino-acid polypeptide reads, in one-letter code: Large ribosomal subunit protein uL2 (280 aa).

Disordered regions lie at residues 1 to 58 (MAIR…GGGH) and 226 to 280 (MNPV…KHGR). Composition is skewed to basic residues over residues 37-58 (LHGHGGRNAHGRITTRHKGGGH) and 268-280 (IVRRRRTGKKHGR).

The protein belongs to the universal ribosomal protein uL2 family. Part of the 50S ribosomal subunit. Forms a bridge to the 30S subunit in the 70S ribosome.

In terms of biological role, one of the primary rRNA binding proteins. Required for association of the 30S and 50S subunits to form the 70S ribosome, for tRNA binding and peptide bond formation. It has been suggested to have peptidyltransferase activity; this is somewhat controversial. Makes several contacts with the 16S rRNA in the 70S ribosome. The polypeptide is Large ribosomal subunit protein uL2 (Mycolicibacterium paratuberculosis (strain ATCC BAA-968 / K-10) (Mycobacterium paratuberculosis)).